The primary structure comprises 291 residues: MKNFVIDQNLKELTEHRTVELPVACYKTTINQNINGYIPLHWHDEIQFVLILKGIALFQINEEKIEVHEGDGLFINSGYLHMAEEKEGSDCTYICLNVSPHFVLSQELYSSYVQPYMFSTNLPYLFLAGNQQWAKNILDAVKKINQLIQQKTSLYEIDITMQLTLMWKNLVVNGFQLEYDQSEMIKSHRMKQMLNWIHLHYVEKITLEDIAKAGQLSRSECCRYFKRMLNKTPLRYVMDYRIQKSLLLLQHPESNVTEVSYQVGFNSTSYFISKFQQAMNMTPLSYKKMNS.

Residues 191-289 (KQMLNWIHLH…NMTPLSYKKM (99 aa)) enclose the HTH araC/xylS-type domain. 2 DNA-binding regions (H-T-H motif) span residues 208-229 (EDIAKAGQLSRSECCRYFKRML) and 256-279 (VTEVSYQVGFNSTSYFISKFQQAM).

This is an uncharacterized protein from Bacillus subtilis (strain 168).